A 900-amino-acid chain; its full sequence is Minor teichoic acid biosynthesis protein GgaB (900 aa).

This sequence belongs to the glycosyltransferase 2 family.

It functions in the pathway cell wall biogenesis; poly(glucopyranosyl N-acetylgalactosamine 1-phosphate) teichoic acid biosynthesis. Its function is as follows. Involved in the biosynthesis of galactosamine-containing minor teichoic acid, a non-essential cell wall polymer in B.subtilis 168. The sequence is that of Minor teichoic acid biosynthesis protein GgaB (ggaB) from Bacillus subtilis (strain 168).